The following is a 338-amino-acid chain: Fructose-1,6-bisphosphatase 1 (338 aa).

The residue at position 2 (threonine 2) is an N-acetylthreonine. AMP contacts are provided by residues 18–22 and 28–32; these read VMEEG and TGEMT. The Mg(2+) site is built by aspartate 69 and glutamate 98. Position 113 to 114 (113 to 114) interacts with AMP; the sequence is KY. Residues aspartate 119, leucine 121, and aspartate 122 each coordinate Mg(2+). A substrate-binding site is contributed by 122–125; sequence DGSS. AMP is bound at residue lysine 141. Lysine 151 is modified (N6-succinyllysine). The residue at position 208 (serine 208) is a Phosphoserine. Residues 213–216, 244–249, tyrosine 265, and 275–277 contribute to the substrate site; these read NEGY, RYVGSM, and KLR. 3 positions are modified to phosphotyrosine: tyrosine 216, tyrosine 245, and tyrosine 265. Position 281 (glutamate 281) interacts with Mg(2+).

The protein belongs to the FBPase class 1 family. As to quaternary structure, homotetramer. Mg(2+) serves as cofactor.

It catalyses the reaction beta-D-fructose 1,6-bisphosphate + H2O = beta-D-fructose 6-phosphate + phosphate. The protein operates within carbohydrate biosynthesis; gluconeogenesis. Subject to complex allosteric regulation. The enzyme can assume an active R-state, or an inactive T-state. Intermediate conformations may exist. AMP acts as an allosteric inhibitor. AMP binding affects the turnover of bound substrate and not the affinity for substrate. Fructose 2,6-bisphosphate acts as a competitive inhibitor. Fructose 2,6-bisphosphate and AMP have synergistic effects. In terms of biological role, catalyzes the hydrolysis of fructose 1,6-bisphosphate to fructose 6-phosphate in the presence of divalent cations, acting as a rate-limiting enzyme in gluconeogenesis. Plays a role in regulating glucose sensing and insulin secretion of pancreatic beta-cells. Appears to modulate glycerol gluconeogenesis in liver. Important regulator of appetite and adiposity; increased expression of the protein in liver after nutrient excess increases circulating satiety hormones and reduces appetite-stimulating neuropeptides and thus seems to provide a feedback mechanism to limit weight gain. The polypeptide is Fructose-1,6-bisphosphatase 1 (FBP1) (Bos taurus (Bovine)).